Consider the following 184-residue polypeptide: ATP synthase subunit b, chloroplastic (184 aa).

A helical transmembrane segment spans residues 27-49; sequence LATNLINLSVVLGVLIFFGKGVL.

This sequence belongs to the ATPase B chain family. As to quaternary structure, F-type ATPases have 2 components, F(1) - the catalytic core - and F(0) - the membrane proton channel. F(1) has five subunits: alpha(3), beta(3), gamma(1), delta(1), epsilon(1). F(0) has four main subunits: a(1), b(1), b'(1) and c(10-14). The alpha and beta chains form an alternating ring which encloses part of the gamma chain. F(1) is attached to F(0) by a central stalk formed by the gamma and epsilon chains, while a peripheral stalk is formed by the delta, b and b' chains.

The protein localises to the plastid. Its subcellular location is the chloroplast thylakoid membrane. F(1)F(0) ATP synthase produces ATP from ADP in the presence of a proton or sodium gradient. F-type ATPases consist of two structural domains, F(1) containing the extramembraneous catalytic core and F(0) containing the membrane proton channel, linked together by a central stalk and a peripheral stalk. During catalysis, ATP synthesis in the catalytic domain of F(1) is coupled via a rotary mechanism of the central stalk subunits to proton translocation. Its function is as follows. Component of the F(0) channel, it forms part of the peripheral stalk, linking F(1) to F(0). This chain is ATP synthase subunit b, chloroplastic, found in Liriodendron tulipifera (Tuliptree).